Reading from the N-terminus, the 249-residue chain is uncharacterized protein (249 aa).

NADP(+) is bound at residue 11–34; sequence IFGGRSQIGGELARRLAAGATMVL. Substrate is bound at residue S142. The active-site Proton acceptor is the Y155.

Belongs to the short-chain dehydrogenases/reductases (SDR) family.

This is an uncharacterized protein from Mycobacterium tuberculosis (strain ATCC 25618 / H37Rv).